Here is a 459-residue protein sequence, read N- to C-terminus: uncharacterized protein (459 aa).

The interval 28 to 47 (AHDEELTGPPQKPAYAAKPA) is disordered. The FAD-binding PCMH-type domain maps to 35–214 (GPPQKPAYAA…TEVIVKLHPR (180 aa)).

It belongs to the oxygen-dependent FAD-linked oxidoreductase family. It depends on FAD as a cofactor.

This is an uncharacterized protein from Mycobacterium tuberculosis (strain CDC 1551 / Oshkosh).